Consider the following 118-residue polypeptide: Ribonuclease P protein component (118 aa).

It belongs to the RnpA family. In terms of assembly, consists of a catalytic RNA component (M1 or rnpB) and a protein subunit.

It carries out the reaction Endonucleolytic cleavage of RNA, removing 5'-extranucleotides from tRNA precursor.. Its function is as follows. RNaseP catalyzes the removal of the 5'-leader sequence from pre-tRNA to produce the mature 5'-terminus. It can also cleave other RNA substrates such as 4.5S RNA. The protein component plays an auxiliary but essential role in vivo by binding to the 5'-leader sequence and broadening the substrate specificity of the ribozyme. The sequence is that of Ribonuclease P protein component from Rickettsia typhi (strain ATCC VR-144 / Wilmington).